Here is a 392-residue protein sequence, read N- to C-terminus: Queuine tRNA-ribosyltransferase (392 aa).

Aspartate 93 acts as the Proton acceptor in catalysis. Substrate is bound by residues 93-97 (DSGGY), aspartate 147, glutamine 189, and glycine 216. Residues 247–253 (GVGAPED) are RNA binding. The active-site Nucleophile is aspartate 266. The tract at residues 271–275 (TRVAR) is RNA binding; important for wobble base 34 recognition. Cysteine 304, cysteine 306, cysteine 309, and histidine 335 together coordinate Zn(2+).

The protein belongs to the queuine tRNA-ribosyltransferase family. In terms of assembly, homodimer. Within each dimer, one monomer is responsible for RNA recognition and catalysis, while the other monomer binds to the replacement base PreQ1. Zn(2+) is required as a cofactor.

The catalysed reaction is 7-aminomethyl-7-carbaguanine + guanosine(34) in tRNA = 7-aminomethyl-7-carbaguanosine(34) in tRNA + guanine. The protein operates within tRNA modification; tRNA-queuosine biosynthesis. In terms of biological role, catalyzes the base-exchange of a guanine (G) residue with the queuine precursor 7-aminomethyl-7-deazaguanine (PreQ1) at position 34 (anticodon wobble position) in tRNAs with GU(N) anticodons (tRNA-Asp, -Asn, -His and -Tyr). Catalysis occurs through a double-displacement mechanism. The nucleophile active site attacks the C1' of nucleotide 34 to detach the guanine base from the RNA, forming a covalent enzyme-RNA intermediate. The proton acceptor active site deprotonates the incoming PreQ1, allowing a nucleophilic attack on the C1' of the ribose to form the product. After dissociation, two additional enzymatic reactions on the tRNA convert PreQ1 to queuine (Q), resulting in the hypermodified nucleoside queuosine (7-(((4,5-cis-dihydroxy-2-cyclopenten-1-yl)amino)methyl)-7-deazaguanosine). In Dehalococcoides mccartyi (strain ATCC BAA-2266 / KCTC 15142 / 195) (Dehalococcoides ethenogenes (strain 195)), this protein is Queuine tRNA-ribosyltransferase.